The chain runs to 122 residues: Ribosome-binding factor A (122 aa).

This sequence belongs to the RbfA family. In terms of assembly, monomer. Binds 30S ribosomal subunits, but not 50S ribosomal subunits or 70S ribosomes.

Its subcellular location is the cytoplasm. Its function is as follows. One of several proteins that assist in the late maturation steps of the functional core of the 30S ribosomal subunit. Associates with free 30S ribosomal subunits (but not with 30S subunits that are part of 70S ribosomes or polysomes). Required for efficient processing of 16S rRNA. May interact with the 5'-terminal helix region of 16S rRNA. This is Ribosome-binding factor A from Polaromonas naphthalenivorans (strain CJ2).